The primary structure comprises 942 residues: Serine/threonine-protein kinase ATG1 (942 aa).

In terms of domain architecture, Protein kinase spans 11–312 (YVVEKEIGKG…FEEFFNNKIV (302 aa)). ATP contacts are provided by residues 17–25 (IGKGSFATV) and lysine 41. Catalysis depends on aspartate 159, which acts as the Proton acceptor. The segment covering 435–452 (NSSRVNKLDKSNLSGKSD) has biased composition (polar residues). 3 disordered regions span residues 435–454 (NSSR…SDSS), 505–529 (QPHN…SRRA), and 817–836 (NSKP…NDSN). Low complexity predominate over residues 515 to 529 (RAPSTTSGGTSSRRA). The segment covering 819-834 (KPGTHNQSPKSKISND) has biased composition (polar residues).

It belongs to the protein kinase superfamily. Ser/Thr protein kinase family. APG1/unc-51/ULK1 subfamily. Homodimer. Forms a ternary complex with ATG13 and ATG17.

The protein resides in the cytoplasm. It is found in the preautophagosomal structure membrane. The catalysed reaction is L-seryl-[protein] + ATP = O-phospho-L-seryl-[protein] + ADP + H(+). It catalyses the reaction L-threonyl-[protein] + ATP = O-phospho-L-threonyl-[protein] + ADP + H(+). In terms of biological role, serine/threonine protein kinase involved in the cytoplasm to vacuole transport (Cvt) and found to be essential in autophagy, where it is required for the formation of autophagosomes. Involved in the clearance of protein aggregates which cannot be efficiently cleared by the proteasome. Required for selective autophagic degradation of the nucleus (nucleophagy) as well as for mitophagy which contributes to regulate mitochondrial quantity and quality by eliminating the mitochondria to a basal level to fulfill cellular energy requirements and preventing excess ROS production. Also involved in endoplasmic reticulum-specific autophagic process, in selective removal of ER-associated degradation (ERAD) substrates. Plays a key role in ATG9 and ATG23 cycling through the pre-autophagosomal structure and is necessary to promote ATG18 binding to ATG9 through phosphorylation of ATG9. Catalyzes phosphorylation of ATG4, decreasing the interaction between ATG4 and ATG8 and impairing deconjugation of PE-conjugated forms of ATG8. Contributes to virulence by conferring resistance to unstable nutrient environments and immune defense of hosts. This Candida glabrata (strain ATCC 2001 / BCRC 20586 / JCM 3761 / NBRC 0622 / NRRL Y-65 / CBS 138) (Yeast) protein is Serine/threonine-protein kinase ATG1.